The chain runs to 505 residues: Trans-cinnamate 4-monooxygenase (505 aa).

The chain crosses the membrane as a helical span at residues 3–23; it reads LLLLEKTLLGLFLAAVVAIVV. Residues 213–218 and alanine 306 contribute to the (E)-cinnamate site; that span reads RSRLAQ. Residue cysteine 447 coordinates heme.

Belongs to the cytochrome P450 family. It depends on heme as a cofactor.

The protein resides in the membrane. It catalyses the reaction (E)-cinnamate + reduced [NADPH--hemoprotein reductase] + O2 = (E)-4-coumarate + oxidized [NADPH--hemoprotein reductase] + H2O + H(+). The protein operates within phenylpropanoid metabolism; trans-4-coumarate biosynthesis; trans-4-coumarate from trans-cinnamate: step 1/1. Its function is as follows. Catalyzes the first oxidative step of the phenylpropanoid pathway in higher plants by transforming trans-cinnamate into p-coumarate. The compounds formed by this pathway are essential components for lignification, pollination, and defense against ultraviolet light, predators and pathogens. The polypeptide is Trans-cinnamate 4-monooxygenase (CYP73A2) (Vigna radiata var. radiata (Mung bean)).